The primary structure comprises 551 residues: Eukaryotic translation initiation factor 3 subunit D-2 (551 aa).

The interval 108–152 (RTRGRTGRGTPNIASLGGSTAGGATASSTKYGKGRHTRNTQNVGR) is disordered. Residues 115 to 136 (RGTPNIASLGGSTAGGATASST) show a composition bias toward low complexity. The tract at residues 290–304 (QFDLLTVNETSVEPP) is RNA gate. Positions 527 to 551 (PENAFDSDRDEEEESSEPLSNSNDN) are disordered.

Belongs to the eIF-3 subunit D family. Component of the eukaryotic translation initiation factor 3 (eIF-3) complex. The eIF-3 complex interacts with pix.

It localises to the cytoplasm. Its function is as follows. mRNA cap-binding component of the eukaryotic translation initiation factor 3 (eIF-3) complex, which is involved in protein synthesis of a specialized repertoire of mRNAs and, together with other initiation factors, stimulates binding of mRNA and methionyl-tRNAi to the 40S ribosome. The eIF-3 complex specifically targets and initiates translation of a subset of mRNAs involved in cell proliferation. In the eIF-3 complex, eif3d specifically recognizes and binds the 7-methylguanosine cap of a subset of mRNAs. The polypeptide is Eukaryotic translation initiation factor 3 subunit D-2 (Drosophila simulans (Fruit fly)).